The following is a 153-amino-acid chain: Prostaglandin E synthase (153 aa).

The Lumenal portion of the chain corresponds to 1–13; the sequence is MPSPGLVMESGQV. A helical membrane pass occupies residues 14-42; sequence LPAFLLCSTLLVIKMYAVAVITGQMRLRK. A glutathione-binding site is contributed by Arg39. Over 43-61 the chain is Cytoplasmic; the sequence is KAFANPEDALKRGGLQYYR. Residues 62 to 91 form a helical membrane-spanning segment; that stretch reads SDPDVERCLRAHRNDMETIYPFLFLGFVYS. 74 to 78 contacts glutathione; it reads RNDME. At 92–96 the chain is on the lumenal side; the sequence is FLGPN. A helical transmembrane segment spans residues 97 to 120; it reads PLIAWIHFLVVLTGRVVHTVAYLG. Residues His114 and Tyr118 each coordinate glutathione. Over 121 to 124 the chain is Cytoplasmic; sequence KLNP. The chain crosses the membrane as a helical span at residues 125 to 153; the sequence is RLRSGAYVLAQFSCFSMALQILWEVAHHL. Glutathione is bound at residue 127–131; it reads RSGAY.

Belongs to the MAPEG family. Homotrimer. It depends on glutathione as a cofactor.

It is found in the membrane. The protein localises to the cytoplasm. It localises to the perinuclear region. The enzyme catalyses prostaglandin H2 = prostaglandin E2. It catalyses the reaction 2-glyceryl-prostaglandin H2 = 2-glyceryl-prostaglandin E2. It carries out the reaction prostaglandin G2 = (15S)-15-hydroperoxy-prostaglandin E2. The catalysed reaction is 1-chloro-2,4-dinitrobenzene + glutathione = 2,4-dinitrophenyl-S-glutathione + chloride + H(+). The enzyme catalyses (5S)-hydroperoxy-(6E,8Z,11Z,14Z)-eicosatetraenoate + 2 glutathione = (5S)-hydroxy-(6E,8Z,11Z,14Z)-eicosatetraenoate + glutathione disulfide + H2O. Its pathway is lipid metabolism; prostaglandin biosynthesis. Activity is increased markedly in macrophages and osteoblasts following pro-inflammatory stimuli. In terms of biological role, terminal enzyme of the cyclooxygenase (COX)-2-mediated prostaglandin E2 (PGE2) biosynthetic pathway. Catalyzes the glutathione-dependent oxidoreduction of prostaglandin endoperoxide H2 (PGH2) to prostaglandin E2 (PGE2) in response to inflammatory stimuli. Plays a key role in inflammation response, fever and pain. Also catalyzes the oxidoreduction of endocannabinoids into prostaglandin glycerol esters and PGG2 into 15-hydroperoxy-PGE2. In addition, displays low glutathione transferase and glutathione-dependent peroxidase activities, toward 1-chloro-2,4-dinitrobenzene and 5-hydroperoxyicosatetraenoic acid (5-HPETE), respectively. The sequence is that of Prostaglandin E synthase (Ptges) from Mus musculus (Mouse).